The chain runs to 424 residues: Dihydroorotase (424 aa).

Zn(2+) contacts are provided by His61 and His63. Substrate contacts are provided by residues 63–65 (HLR) and Asn95. Residues Asp153, His180, and His233 each coordinate Zn(2+). Asn279 lines the substrate pocket. Position 306 (Asp306) interacts with Zn(2+). Residue Asp306 is part of the active site. Position 310 (His310) interacts with substrate.

Belongs to the metallo-dependent hydrolases superfamily. DHOase family. Class I DHOase subfamily. It depends on Zn(2+) as a cofactor.

The catalysed reaction is (S)-dihydroorotate + H2O = N-carbamoyl-L-aspartate + H(+). The protein operates within pyrimidine metabolism; UMP biosynthesis via de novo pathway; (S)-dihydroorotate from bicarbonate: step 3/3. Catalyzes the reversible cyclization of carbamoyl aspartate to dihydroorotate. The sequence is that of Dihydroorotase from Citrifermentans bemidjiense (strain ATCC BAA-1014 / DSM 16622 / JCM 12645 / Bem) (Geobacter bemidjiensis).